Reading from the N-terminus, the 288-residue chain is Homoserine kinase (288 aa).

79 to 89 (PPARGLGSSSA) serves as a coordination point for ATP.

This sequence belongs to the GHMP kinase family. Homoserine kinase subfamily.

The protein localises to the cytoplasm. It catalyses the reaction L-homoserine + ATP = O-phospho-L-homoserine + ADP + H(+). Its pathway is amino-acid biosynthesis; L-threonine biosynthesis; L-threonine from L-aspartate: step 4/5. Catalyzes the ATP-dependent phosphorylation of L-homoserine to L-homoserine phosphate. In Listeria monocytogenes serovar 1/2a (strain ATCC BAA-679 / EGD-e), this protein is Homoserine kinase.